Here is a 197-residue protein sequence, read N- to C-terminus: Putative phosphopantothenoylcysteine decarboxylase (197 aa).

Residues Phe52 and 102–105 contribute to the FMN site; that span reads SANT. Asn139 is a binding site for substrate. Cys174 acts as the Proton donor in catalysis.

Belongs to the HFCD (homooligomeric flavin containing Cys decarboxylase) superfamily. As to quaternary structure, homotrimer. It depends on FMN as a cofactor.

It catalyses the reaction N-[(R)-4-phosphopantothenoyl]-L-cysteine + H(+) = (R)-4'-phosphopantetheine + CO2. Its pathway is cofactor biosynthesis; coenzyme A biosynthesis; CoA from (R)-pantothenate: step 3/5. Necessary for the biosynthesis of coenzyme A. Catalyzes the decarboxylation of 4-phosphopantothenoylcysteine to form 4'-phosphopantotheine. This is Putative phosphopantothenoylcysteine decarboxylase (ppcdc) from Dictyostelium discoideum (Social amoeba).